The primary structure comprises 150 residues: MKYQQLENLESGWKWKYLVKKHREGELITRYIEASAAQEAVDELLSLENEPVLVNGWIDKHMNPELVNRMKQTIRARRKRHFNAEHQHTRKKSIDLEFIVWQRLAGLAQRRGKTLSETIVQLIEDAENKEKYANKMSSLKQDLQALLGKE.

Belongs to the MatP family. As to quaternary structure, homodimer.

It localises to the cytoplasm. Functionally, required for spatial organization of the terminus region of the chromosome (Ter macrodomain) during the cell cycle. Prevents early segregation of duplicated Ter macrodomains during cell division. Binds specifically to matS, which is a 13 bp signature motif repeated within the Ter macrodomain. This chain is Macrodomain Ter protein, found in Escherichia coli O81 (strain ED1a).